The sequence spans 83 residues: MVTIRLARGGSKKRPFYHLTVTDSRNARDGRFVERIGFFNPVASGAEVKLSVDQERAAYWLGQGAQPSERVAHLLKEAAKATA.

The protein belongs to the bacterial ribosomal protein bS16 family.

This Azotobacter vinelandii (strain DJ / ATCC BAA-1303) protein is Small ribosomal subunit protein bS16.